We begin with the raw amino-acid sequence, 150 residues long: Transcriptional repressor NrdR (150 aa).

The segment at 3 to 33 (CPYCTGESAVIDTRELDNGETIRRRRRCKHC) is a zinc-finger region. The region spanning 48–138 (VMVVKKNGDR…VYRSFSDLGK (91 aa)) is the ATP-cone domain.

This sequence belongs to the NrdR family. It depends on Zn(2+) as a cofactor.

In terms of biological role, negatively regulates transcription of bacterial ribonucleotide reductase nrd genes and operons by binding to NrdR-boxes. The protein is Transcriptional repressor NrdR of Herpetosiphon aurantiacus (strain ATCC 23779 / DSM 785 / 114-95).